The following is a 900-amino-acid chain: Phosphoenolpyruvate carboxylase (900 aa).

Residues H140 and K568 contribute to the active site.

Belongs to the PEPCase type 1 family. Requires Mg(2+) as cofactor.

It carries out the reaction oxaloacetate + phosphate = phosphoenolpyruvate + hydrogencarbonate. In terms of biological role, forms oxaloacetate, a four-carbon dicarboxylic acid source for the tricarboxylic acid cycle. The chain is Phosphoenolpyruvate carboxylase from Neisseria meningitidis serogroup A / serotype 4A (strain DSM 15465 / Z2491).